The sequence spans 689 residues: Outer spore wall assembly protein SHE10 (689 aa).

A signal peptide spans 1-18 (MKILTKFFLLLVVTTCSL). Residues 259 to 308 (TKAKSKSKPRVNASASARGNARAGAKAGAKAGTSEISASATADPTTSASA) are disordered. Residues 270–308 (NASASARGNARAGAKAGAKAGTSEISASATADPTTSASA) are compositionally biased toward low complexity. Residues 406–435 (NKTKTVSEVLQNRYKNLNRAIQDINCTCET) are a coiled coil. The segment covering 610–626 (EQESKQREDSPRMDRDS) has biased composition (basic and acidic residues). Residues 610-689 (EQESKQREDS…TVQNNVTLQI (80 aa)) form a disordered region. Composition is skewed to polar residues over residues 627 to 637 (TQNVENSNTTT), 655 to 670 (QNGTNSTEKFSAGPDS), and 677 to 689 (METTVQNNVTLQI).

Belongs to the SHE10 family. In terms of assembly, component of the mitochondria-localized RNase mitochondrial RNA-processing (RNase MRP) composed of one single RNA encoded by the NME1 gene and at least 31 proteins. Absent in the nucleus-localized RNase MRP (NuMRP).

It is found in the mitochondrion. In terms of biological role, involved in spore wall assembly. May be a component of the mitochondrial RNase MRP (MtMRP), a ribonucleoprotein endoribonuclease involved in the cleaving RNA transcripts to generate primers for DNA replication in mitochondria. The protein is Outer spore wall assembly protein SHE10 of Zygosaccharomyces rouxii (strain ATCC 2623 / CBS 732 / NBRC 1130 / NCYC 568 / NRRL Y-229).